Consider the following 859-residue polypeptide: Photoactivated adenylate cyclase subunit beta-like protein ST- (859 aa).

The region spanning 56-149 (LRRLMYLSKS…GRMYGDWHMK (94 aa)) is the BLUF 1 domain. The interval 420-444 (RPPIFDDTPKSNPRPRTPGYGGRQR) is disordered. Positions 471-563 (LTTLTYISQA…RVYTSEWTLT (93 aa)) constitute a BLUF 2 domain. The segment at 814–859 (ARSGEQPLTEPEQAKPDFRVSPGRDRHGVSGRRSNSSQGKGSIQVG) is disordered. The span at 825–841 (EQAKPDFRVSPGRDRHG) shows a compositional bias: basic and acidic residues. Positions 845–859 (RRSNSSQGKGSIQVG) are enriched in polar residues.

As to quaternary structure, heterotetramer of two alpha and two beta subunits.

It localises to the cell projection. Its subcellular location is the cilium. The protein resides in the flagellum. This is Photoactivated adenylate cyclase subunit beta-like protein ST- from Euglena gracilis.